A 130-amino-acid chain; its full sequence is Small ribosomal subunit protein uS9 (130 aa).

It belongs to the universal ribosomal protein uS9 family.

In Streptococcus thermophilus (strain CNRZ 1066), this protein is Small ribosomal subunit protein uS9.